A 301-amino-acid chain; its full sequence is Rhodopsin (301 aa).

Topologically, residues 1-18 (LHMIHLHWYQYPPMNPMM) are extracellular. The chain crosses the membrane as a helical span at residues 19-43 (YPLLLIFMLFTGILCLAGNFVTIWV). The Cytoplasmic segment spans residues 44-55 (FMNTKSLRTPAN). The chain crosses the membrane as a helical span at residues 56–78 (LLVVNLAMSDFLMMFTMFPPMMV). Residues 79–92 (TCYYHTWTLGPTFC) are Extracellular-facing. Cysteines 92 and 169 form a disulfide. Residues 93–115 (QVYAFLGNLCGCASIWTMVFITF) traverse the membrane as a helical segment. A 'Ionic lock' involved in activated form stabilization motif is present at residues 116–118 (DRY). Residues 116-134 (DRYNVIVKGVAGEPLSTKK) are Cytoplasmic-facing. Residues 135 to 155 (ASLWILTIWVLSTTWCIAPFF) traverse the membrane as a helical segment. Residues 156-182 (GWNHYVPEGNLTGCGTDYLSEDILSRS) lie on the Extracellular side of the membrane. A glycan (N-linked (GlcNAc...) asparagine) is linked at Asn-165. The helical transmembrane segment at 183-204 (YLYVYSTWVYFLPLAITIYCYV) threads the bilayer. Residues 205-245 (FIIKAVAAHEKGMRDQAKKMGIKSLRNEEAQKTSAECRLAK) are Cytoplasmic-facing. Residues 246 to 267 (IAMTTVALWFIAWTPCLLINWV) traverse the membrane as a helical segment. The Extracellular segment spans residues 268 to 278 (GMFARSYLSPV). A helical transmembrane segment spans residues 279–300 (YTIWGYVFAKANAVYNPIVYAI). The residue at position 288 (Lys-288) is an N6-(retinylidene)lysine.

The protein belongs to the G-protein coupled receptor 1 family. Opsin subfamily. In terms of assembly, homodimer. Interacts with GNAQ. In terms of processing, contains one covalently linked retinal chromophore.

It localises to the cell projection. Its subcellular location is the rhabdomere membrane. Functionally, photoreceptor required for image-forming vision at low light intensity. Can use both retinal and 3-dehydroretinal as visual pigment. Light-induced isomerization of 11-cis to all-trans retinal triggers a conformational change that activates signaling via G-proteins. Signaling via GNAQ probably mediates the activation of phospholipase C. This Procambarus seminolae (Crayfish) protein is Rhodopsin (RHO).